We begin with the raw amino-acid sequence, 196 residues long: MSLRIDAVILAGGQARRMGGQDKGLVELLGKPMIEHAITRIQPQVKEILINANRNQNLYAQFADCVFGDEDSGFLGPLAGMVTAMGKTQADLLLVVPCDCPCLPTDLVARMAAALEAEAADLAVASDGEYEQPVVMLLKPSLRDSMKAFLAAGERKIDFWYAKHKVAVVSFADQPNAFVNVNTPEQVEQLSKALTQ.

GTP is bound by residues Leu10–Gly12, Lys23, Asn51, Asp69, and Asp99. Residue Asp99 participates in Mg(2+) binding.

This sequence belongs to the MobA family. Monomer. Requires Mg(2+) as cofactor.

Its subcellular location is the cytoplasm. It carries out the reaction Mo-molybdopterin + GTP + H(+) = Mo-molybdopterin guanine dinucleotide + diphosphate. Its function is as follows. Transfers a GMP moiety from GTP to Mo-molybdopterin (Mo-MPT) cofactor (Moco or molybdenum cofactor) to form Mo-molybdopterin guanine dinucleotide (Mo-MGD) cofactor. This chain is Molybdenum cofactor guanylyltransferase, found in Shewanella amazonensis (strain ATCC BAA-1098 / SB2B).